A 501-amino-acid polypeptide reads, in one-letter code: IQ domain-containing protein M (501 aa).

The segment covering 237–247 (ERQPIKPEPKS) has biased composition (basic and acidic residues). Positions 237–262 (ERQPIKPEPKSQPRIKGTPNKTDKLD) are disordered. The IQ domain occupies 290-319 (LIRMVTVMQAHVRGWLERKRLQRVMTKALD).

The polypeptide is IQ domain-containing protein M (Homo sapiens (Human)).